A 463-amino-acid chain; its full sequence is Nitrogenase iron-molybdenum cofactor biosynthesis protein NifE (463 aa).

It belongs to the NifD/NifK/NifE/NifN family.

The protein operates within cofactor biosynthesis; Fe-Mo cofactor biosynthesis. In terms of biological role, this protein may play a role in the biosynthesis of the prosthetic group of nitrogenase (FeMo cofactor). The polypeptide is Nitrogenase iron-molybdenum cofactor biosynthesis protein NifE (nifE2) (Methanosarcina barkeri).